A 66-amino-acid polypeptide reads, in one-letter code: Large ribosomal subunit protein bL32 (66 aa).

It belongs to the bacterial ribosomal protein bL32 family.

This Rickettsia akari (strain Hartford) protein is Large ribosomal subunit protein bL32.